The following is a 151-amino-acid chain: Deoxyuridine 5'-triphosphate nucleotidohydrolase (151 aa).

Substrate-binding positions include 70–72 (RSG), Asn-83, 87–89 (LID), and Met-97.

This sequence belongs to the dUTPase family. Homotrimer. Mg(2+) is required as a cofactor.

It catalyses the reaction dUTP + H2O = dUMP + diphosphate + H(+). Its pathway is pyrimidine metabolism; dUMP biosynthesis; dUMP from dCTP (dUTP route): step 2/2. Its function is as follows. This enzyme is involved in nucleotide metabolism: it produces dUMP, the immediate precursor of thymidine nucleotides and it decreases the intracellular concentration of dUTP so that uracil cannot be incorporated into DNA. This chain is Deoxyuridine 5'-triphosphate nucleotidohydrolase, found in Escherichia coli (strain K12 / MC4100 / BW2952).